The primary structure comprises 323 residues: Serine acetyltransferase 2 (323 aa).

Residues 302 to 323 (AQSNGPSLSAGDTEKGHTNSTS) form a disordered region. Positions 313 to 323 (DTEKGHTNSTS) are enriched in basic and acidic residues.

The protein belongs to the transferase hexapeptide repeat family. Homomultimer. In terms of tissue distribution, ubiquitously expressed at low levels. Localized in vascular tissues, particularly in phloem.

The protein localises to the cytoplasm. It carries out the reaction L-serine + acetyl-CoA = O-acetyl-L-serine + CoA. Its pathway is amino-acid biosynthesis; L-cysteine biosynthesis; L-cysteine from L-serine: step 1/2. The chain is Serine acetyltransferase 2 from Arabidopsis thaliana (Mouse-ear cress).